We begin with the raw amino-acid sequence, 433 residues long: Trigger factor (433 aa).

The 86-residue stretch at 166 to 251 (GDFAVIDFEG…LHEIQERAKP (86 aa)) folds into the PPIase FKBP-type domain.

It belongs to the FKBP-type PPIase family. Tig subfamily.

It is found in the cytoplasm. It catalyses the reaction [protein]-peptidylproline (omega=180) = [protein]-peptidylproline (omega=0). In terms of biological role, involved in protein export. Acts as a chaperone by maintaining the newly synthesized protein in an open conformation. Functions as a peptidyl-prolyl cis-trans isomerase. This Aliarcobacter butzleri (strain RM4018) (Arcobacter butzleri) protein is Trigger factor.